A 205-amino-acid polypeptide reads, in one-letter code: MAHGPGALMLKCVVVGDGAVGKTCLLMSYANDAFPEEYVPTVFDHYAVSVTVGGKQYLLGLYDTAGQEDYDRLRPLSYPMTDVFLICFSVVNPASFQNVKEEWVPELKEYAPNVPFLLIGTQIDLRDDPKTLARLNDMKEKPVCVEQGQKLAKEIGACCYVECSALTQKGLKTVFDEAIIAILTPKKHTVKKRIGSRCINCCLIT.

16-23 (GDGAVGKT) lines the GTP pocket. The Effector region motif lies at 38–46 (YVPTVFDHY). GTP-binding positions include 63 to 67 (DTAGQ) and 121 to 124 (TQID). C202 carries the cysteine methyl ester modification. C202 is lipidated: S-farnesyl cysteine. Positions 203–205 (LIT) are cleaved as a propeptide — removed in mature form.

This sequence belongs to the small GTPase superfamily. Rho family. In terms of assembly, interacts with EXO70, CDC42EP1, CDC42EP2 and CDC42EP3 in a GTP-dependent manner. Interacts with CDC42EP4, PARD6A, PARD6G (and probably PARD6B) in a GTP-dependent manner. Part of a quaternary complex containing PARD3, some PARD6 protein (PARD6A, PARD6B or PARD6G) and some atypical PKC protein (PRKCI or PRKCZ). Interacts with GOPC. Interacts with ARHGAP33/TCGAP. In terms of processing, may be post-translationally modified by both palmitoylation and polyisoprenylation.

Its subcellular location is the cytoplasm. It is found in the cell membrane. With respect to regulation, regulated by guanine nucleotide exchange factors (GEFs) which promote the exchange of bound GDP for free GTP, GTPase activating proteins (GAPs) which increase the GTP hydrolysis activity, and GDP dissociation inhibitors which inhibit the dissociation of the nucleotide from the GTPase. Plasma membrane-associated small GTPase which cycles between an active GTP-bound and an inactive GDP-bound state. In active state binds to a variety of effector proteins to regulate cellular responses. Involved in epithelial cell polarization processes. May play a role in CFTR trafficking to the plasma membrane. Causes the formation of thin, actin-rich surface projections called filopodia. This is Rho-related GTP-binding protein RhoQ (Rhoq) from Mus musculus (Mouse).